The sequence spans 375 residues: CCA-adding enzyme (375 aa).

Residues Gly-8 and Arg-11 each coordinate ATP. Residues Gly-8 and Arg-11 each coordinate CTP. Positions 21 and 23 each coordinate Mg(2+). Positions 91, 137, and 140 each coordinate ATP. Arg-91, Arg-137, and Arg-140 together coordinate CTP.

This sequence belongs to the tRNA nucleotidyltransferase/poly(A) polymerase family. Bacterial CCA-adding enzyme type 2 subfamily. Mg(2+) is required as a cofactor.

The enzyme catalyses a tRNA precursor + 2 CTP + ATP = a tRNA with a 3' CCA end + 3 diphosphate. It catalyses the reaction a tRNA with a 3' CCA end + 2 CTP + ATP = a tRNA with a 3' CCACCA end + 3 diphosphate. Functionally, catalyzes the addition and repair of the essential 3'-terminal CCA sequence in tRNAs without using a nucleic acid template. Adds these three nucleotides in the order of C, C, and A to the tRNA nucleotide-73, using CTP and ATP as substrates and producing inorganic pyrophosphate. tRNA 3'-terminal CCA addition is required both for tRNA processing and repair. Also involved in tRNA surveillance by mediating tandem CCA addition to generate a CCACCA at the 3' terminus of unstable tRNAs. While stable tRNAs receive only 3'-terminal CCA, unstable tRNAs are marked with CCACCA and rapidly degraded. The polypeptide is CCA-adding enzyme (Pseudomonas entomophila (strain L48)).